The sequence spans 318 residues: Biotin synthase (318 aa).

The 230-residue stretch at 44-273 (LCGNKFDLCT…TVQIRLAGGR (230 aa)) folds into the Radical SAM core domain. [4Fe-4S] cluster-binding residues include cysteine 62, cysteine 66, and cysteine 69. Positions 106, 138, 198, and 268 each coordinate [2Fe-2S] cluster.

It belongs to the radical SAM superfamily. Biotin synthase family. In terms of assembly, homodimer. It depends on [4Fe-4S] cluster as a cofactor. [2Fe-2S] cluster is required as a cofactor.

It carries out the reaction (4R,5S)-dethiobiotin + (sulfur carrier)-SH + 2 reduced [2Fe-2S]-[ferredoxin] + 2 S-adenosyl-L-methionine = (sulfur carrier)-H + biotin + 2 5'-deoxyadenosine + 2 L-methionine + 2 oxidized [2Fe-2S]-[ferredoxin]. It functions in the pathway cofactor biosynthesis; biotin biosynthesis; biotin from 7,8-diaminononanoate: step 2/2. Its function is as follows. Catalyzes the conversion of dethiobiotin (DTB) to biotin by the insertion of a sulfur atom into dethiobiotin via a radical-based mechanism. This is Biotin synthase from Clostridium botulinum (strain Loch Maree / Type A3).